Consider the following 245-residue polypeptide: ATP synthase subunit a, chloroplastic (245 aa).

Helical transmembrane passes span 34–54 (TLMTSWFVISLIMIIAFLSNL), 93–113 (VPFLGAVFLFIFVSNWGGALL), 132–152 (INTTVALALLTSFSYFYAGIS), 197–217 (LVIAVLVSLVPLFVPVPLMLL), and 218–238 (GLFTSAIQALVFSTLAGAYIG).

It belongs to the ATPase A chain family. F-type ATPases have 2 components, CF(1) - the catalytic core - and CF(0) - the membrane proton channel. CF(1) has five subunits: alpha(3), beta(3), gamma(1), delta(1), epsilon(1). CF(0) has four main subunits: a, b, b' and c.

Its subcellular location is the plastid. The protein resides in the chloroplast thylakoid membrane. Key component of the proton channel; it plays a direct role in the translocation of protons across the membrane. The protein is ATP synthase subunit a, chloroplastic of Bigelowiella natans (Pedinomonas minutissima).